The sequence spans 242 residues: Carboxy-S-adenosyl-L-methionine synthase (242 aa).

S-adenosyl-L-methionine contacts are provided by residues Y39, 64 to 66 (GCS), 89 to 90 (DN), 117 to 118 (DI), N132, and R199.

It belongs to the class I-like SAM-binding methyltransferase superfamily. Cx-SAM synthase family. Homodimer.

It carries out the reaction prephenate + S-adenosyl-L-methionine = carboxy-S-adenosyl-L-methionine + 3-phenylpyruvate + H2O. Functionally, catalyzes the conversion of S-adenosyl-L-methionine (SAM) to carboxy-S-adenosyl-L-methionine (Cx-SAM). The sequence is that of Carboxy-S-adenosyl-L-methionine synthase from Aliivibrio fischeri (strain MJ11) (Vibrio fischeri).